The primary structure comprises 428 residues: Flotillin-2 (428 aa).

The N-myristoyl glycine moiety is linked to residue Gly-2. The S-palmitoyl cysteine; by ZDHHC5 moiety is linked to residue Cys-4. Cys-19 carries S-palmitoyl cysteine lipidation. Cys-20 carries the S-palmitoyl cysteine; by ZDHHC5 lipid modification. Residue Ser-405 is modified to Phosphoserine.

This sequence belongs to the band 7/mec-2 family. Flotillin subfamily. In terms of assembly, heterooligomeric complex of flotillin-1 and flotillin-2 and caveolin-1 and caveolin-2. Interacts with ECPAS. Post-translationally, ZDHHC5-catalyzed palmitoylation may be required for the formation of higher-order complexes and for neurite outgrowth in cultured neural stem cells. In terms of tissue distribution, expressed in many tissues, including suprabasal epidermis, hair follicles, heart, lung, thymus, spleen, liver, kidney and brain. Not expressed in skeletal muscle.

Its subcellular location is the cell membrane. The protein resides in the membrane. It localises to the caveola. It is found in the endosome. In terms of biological role, may act as a scaffolding protein within caveolar membranes, functionally participating in formation of caveolae or caveolae-like vesicles. May be involved in epidermal cell adhesion and epidermal structure and function. The polypeptide is Flotillin-2 (Flot2) (Mus musculus (Mouse)).